Consider the following 922-residue polypeptide: Histidine kinase 5 (922 aa).

Coiled coils occupy residues 86 to 120 and 169 to 205; these read MQDN…EEYK and KQKA…SQSA. A Histidine kinase domain is found at 373–614; the sequence is TMSHEIRSPL…TFTFILPYKV (242 aa). H376 bears the Phosphohistidine; by autocatalysis mark. Disordered regions lie at residues 620-639 and 728-773; these read YSDD…EPDD and NGRC…TEVK. Low complexity predominate over residues 738-747; that stretch reads SCSSSQASSE. The span at 761–773 shows a compositional bias: basic and acidic residues; that stretch reads SHREEEKAETEVK. Residues 779–921 enclose the Response regulatory domain; it reads KILLVEDNKI…KLRECLQQYL (143 aa). Mg(2+)-binding residues include D785, D828, and C830. D828 carries the 4-aspartylphosphate modification.

Interacts with AHP1, APH2, APH3, APH5 and APH6, but not with APH4. In terms of tissue distribution, present in light-grown but not in etiolated seedlings. Mostly expressed in roots flowers and siliques, and, to a lower extent, in stems and leaves, especially in guard cells.

Its subcellular location is the cell membrane. It localises to the cytoplasm. It catalyses the reaction ATP + protein L-histidine = ADP + protein N-phospho-L-histidine.. Functionally, functions as a histidine kinase and transmits the stress signal to a downstream MAPK cascade. This protein undergoes an ATP-dependent autophosphorylation at a conserved histidine residue in the kinase core, and a phosphoryl group is then transferred to a conserved aspartate residue in the receiver domain. Negative regulator of the ETR1-dependent abscisic acid (ABA) and ethylene signaling pathway that inhibits the root elongation. Promotes stomatal closure. Regulates stomatal opening by integrating multiple signals via hydrogen peroxide H(2)O(2) homeostasis in guard cells in an ABA-independent manner. May contribute to basal defense mechanisms by closing stomata in the presence of bacterial pathogens. Regulates both hormone levels and ROS production in response to stress. Required for full immunity to bacterial pathogen and necrotrophic fungus. The sequence is that of Histidine kinase 5 (AHK5) from Arabidopsis thaliana (Mouse-ear cress).